The sequence spans 239 residues: 1-(5-phosphoribosyl)-5-[(5-phosphoribosylamino)methylideneamino] imidazole-4-carboxamide isomerase (239 aa).

The Proton acceptor role is filled by Asp-8. Asp-129 (proton donor) is an active-site residue.

This sequence belongs to the HisA/HisF family.

Its subcellular location is the cytoplasm. The catalysed reaction is 1-(5-phospho-beta-D-ribosyl)-5-[(5-phospho-beta-D-ribosylamino)methylideneamino]imidazole-4-carboxamide = 5-[(5-phospho-1-deoxy-D-ribulos-1-ylimino)methylamino]-1-(5-phospho-beta-D-ribosyl)imidazole-4-carboxamide. It participates in amino-acid biosynthesis; L-histidine biosynthesis; L-histidine from 5-phospho-alpha-D-ribose 1-diphosphate: step 4/9. The polypeptide is 1-(5-phosphoribosyl)-5-[(5-phosphoribosylamino)methylideneamino] imidazole-4-carboxamide isomerase (Cereibacter sphaeroides (strain ATCC 17029 / ATH 2.4.9) (Rhodobacter sphaeroides)).